The sequence spans 385 residues: Mannitol-1-phosphate 5-dehydrogenase (385 aa).

Position 3–14 (3–14 (ALQFGAGNIGRG)) interacts with NAD(+).

Belongs to the mannitol dehydrogenase family.

The enzyme catalyses D-mannitol 1-phosphate + NAD(+) = beta-D-fructose 6-phosphate + NADH + H(+). This is Mannitol-1-phosphate 5-dehydrogenase from Buchnera aphidicola subsp. Acyrthosiphon pisum (strain Tuc7).